A 75-amino-acid chain; its full sequence is U6-lycotoxin-Ls1b (75 aa).

The signal sequence occupies residues 1–21 (MKLLLFTALVLVVISLIEVEA). A propeptide spanning residues 22–25 (ENER) is cleaved from the precursor.

It belongs to the neurotoxin 19 (CSTX) family. 06 (U6-Lctx) subfamily. Post-translationally, contains 4 disulfide bonds. As to expression, expressed by the venom gland.

It is found in the secreted. This Lycosa singoriensis (Wolf spider) protein is U6-lycotoxin-Ls1b.